Reading from the N-terminus, the 354-residue chain is Methylthioribose-1-phosphate isomerase (354 aa).

Substrate contacts are provided by residues 58-60 (RGA), R101, and Q204. D245 acts as the Proton donor in catalysis. Residue 255 to 256 (NK) participates in substrate binding.

It belongs to the eIF-2B alpha/beta/delta subunits family. MtnA subfamily.

The catalysed reaction is 5-(methylsulfanyl)-alpha-D-ribose 1-phosphate = 5-(methylsulfanyl)-D-ribulose 1-phosphate. It participates in amino-acid biosynthesis; L-methionine biosynthesis via salvage pathway; L-methionine from S-methyl-5-thio-alpha-D-ribose 1-phosphate: step 1/6. Catalyzes the interconversion of methylthioribose-1-phosphate (MTR-1-P) into methylthioribulose-1-phosphate (MTRu-1-P). In Xanthomonas oryzae pv. oryzae (strain MAFF 311018), this protein is Methylthioribose-1-phosphate isomerase.